Here is a 160-residue protein sequence, read N- to C-terminus: Transcription elongation factor GreA (160 aa).

Residues 49 to 75 are a coiled coil; it reads SEYDEAKNDQAFTEGKILQLENKLKNA.

It belongs to the GreA/GreB family.

In terms of biological role, necessary for efficient RNA polymerase transcription elongation past template-encoded arresting sites. The arresting sites in DNA have the property of trapping a certain fraction of elongating RNA polymerases that pass through, resulting in locked ternary complexes. Cleavage of the nascent transcript by cleavage factors such as GreA or GreB allows the resumption of elongation from the new 3'terminus. GreA releases sequences of 2 to 3 nucleotides. The polypeptide is Transcription elongation factor GreA (Clostridium botulinum (strain Eklund 17B / Type B)).